A 146-amino-acid chain; its full sequence is CysO-cysteine peptidase (146 aa).

Residues 11–134 (LVIRADLVNA…LRSYRIVDGA (124 aa)) form the MPN domain. The Zn(2+) site is built by H88, H90, and D101. The JAMM motif signature appears at 88–101 (HSHTATEAYPSRTD).

This sequence belongs to the peptidase M67A family. Requires Zn(2+) as cofactor.

It catalyses the reaction [CysO sulfur-carrier protein]-Gly-NH-CH2-C(O)-S-L-Cys + H2O = [CysO sulfur-carrier protein]-C-terminal Gly-Gly + L-cysteine + H(+). It participates in amino-acid biosynthesis; L-cysteine biosynthesis. Its function is as follows. Protease that hydrolyzes the covalent CysO-cysteine adduct synthesized by CysM to release L-cysteine and regenerate CysO. The sequence is that of CysO-cysteine peptidase (mec) from Mycobacterium bovis (strain ATCC BAA-935 / AF2122/97).